The sequence spans 153 residues: MNKETKLQVEAIKNGTVIDHIPAQVGIKVLKLFDMHNSSQRVTIGLNLPSSALGNKDLLKIENVFINEEQASKLALYAPHATVNQIEDYQVVKKLALELPEFVSDVFECPNTNCITHNEPVASNFRVFEKKGDVRLKCKYCEKVFSREIVTER.

4 residues coordinate Zn(2+): Cys-109, Cys-114, Cys-138, and Cys-141.

It belongs to the PyrI family. As to quaternary structure, contains catalytic and regulatory chains. Zn(2+) is required as a cofactor.

In terms of biological role, involved in allosteric regulation of aspartate carbamoyltransferase. The polypeptide is Aspartate carbamoyltransferase regulatory chain (Vibrio vulnificus (strain CMCP6)).